Reading from the N-terminus, the 116-residue chain is Small ribosomal subunit protein uS17 (116 aa).

This sequence belongs to the universal ribosomal protein uS17 family. As to quaternary structure, part of the 30S ribosomal subunit.

One of the primary rRNA binding proteins, it binds specifically to the 5'-end of 16S ribosomal RNA. This Pyrococcus horikoshii (strain ATCC 700860 / DSM 12428 / JCM 9974 / NBRC 100139 / OT-3) protein is Small ribosomal subunit protein uS17.